The chain runs to 506 residues: Maturase K (506 aa).

This sequence belongs to the intron maturase 2 family. MatK subfamily.

It localises to the plastid. The protein localises to the chloroplast. Usually encoded in the trnK tRNA gene intron. Probably assists in splicing its own and other chloroplast group II introns. This is Maturase K from Lathyrus tingitanus (Tangier pea).